We begin with the raw amino-acid sequence, 275 residues long: Large ribosomal subunit protein uL2c (275 aa).

The disordered stretch occupies residues 225–249 (PVDHPHGGGEGRAPIGRKKPTTPWG).

It belongs to the universal ribosomal protein uL2 family. In terms of assembly, part of the 50S ribosomal subunit.

The protein resides in the plastid. In Cuscuta reflexa (Southern Asian dodder), this protein is Large ribosomal subunit protein uL2c (rpl2).